Reading from the N-terminus, the 317-residue chain is Adenine deaminase (317 aa).

H14, H16, and H194 together coordinate Zn(2+). The active-site Proton donor is the E197. Residue D275 coordinates Zn(2+). Residue D276 participates in substrate binding.

This sequence belongs to the metallo-dependent hydrolases superfamily. Adenosine and AMP deaminases family. Adenine deaminase type 2 subfamily. Zn(2+) serves as cofactor.

It carries out the reaction adenine + H2O + H(+) = hypoxanthine + NH4(+). Functionally, catalyzes the hydrolytic deamination of adenine to hypoxanthine. Plays an important role in the purine salvage pathway and in nitrogen catabolism. This Pseudomonas syringae pv. syringae (strain B728a) protein is Adenine deaminase.